Consider the following 639-residue polypeptide: MVDYIVEYDYDAVHDDELTIRVGEIIRNVKKLQEEGWLEGELNGRRGMFPDNFVKEIKRETEFKDDSLPIKRERHGNVASLVQRISTYGLPAGGIQPHPQTKNIKKKTKKRQCKVLFEYIPQNEDELELKVGDIIDINEEVEEGWWSGTLNNKLGLFPSNFVKELEVTDDGETHEAQDDSETVLAGPTSPIPSLGNVSETASGSVTQPKKIRGIGFGDIFKEGSVKLRTRTSSSETEEKKPEKPLILQSLGPKTQSVEITKTDTEGKIKAKEYCRTLFAYEGTNEDELTFKEGEIIHLISKETGEAGWWRGELNGKEGVFPDNFAVQINELDKDFPKPKKPPPPAKAPAPKPELIAAEKKYFSLKPEEKDEKSTLEQKPSKPAAPQVPPKKPTPPTKASNLLRSSGTVYPKRPEKPVPPPPPIAKINGEVSSISSKFETEPVSKLKLDSEQLPLRPKSVDFDSLTVRTSKETDVVNFDDIASSENLLHLTANRPKMPGRRLPGRFNGGHSPTHSPEKILKLPKEEDSANLKPSELKKDTCYSPKPSVYLSTPSSASKANTTAFLTPLEIKAKVETDDVKKNSLDELRAQIIELLCIVEALKKDHGKELEKLRKDLEEEKTMRSNLEMEIEKLKKAVLSS.

Residues 1-59 enclose the SH3 1; truncated domain; the sequence is MVDYIVEYDYDAVHDDELTIRVGEIIRNVKKLQEEGWLEGELNGRRGMFPDNFVKEIKR. Positions 1–175 are interaction with ANLN and localization to the midbody; the sequence is MVDYIVEYDY…EVTDDGETHE (175 aa). Lysine 58 is covalently cross-linked (Glycyl lysine isopeptide (Lys-Gly) (interchain with G-Cter in SUMO2)). Serine 67, serine 80, and serine 86 each carry phosphoserine. In terms of domain architecture, SH3 2 spans 108 to 167; that stretch reads TKKRQCKVLFEYIPQNEDELELKVGDIIDINEEVEEGWWSGTLNNKLGLFPSNFVKELEV. Over residues 168–177 the composition is skewed to basic and acidic residues; sequence TDDGETHEAQ. Positions 168–209 are disordered; the sequence is TDDGETHEAQDDSETVLAGPTSPIPSLGNVSETASGSVTQPK. Polar residues predominate over residues 195–207; it reads GNVSETASGSVTQ. Serine 224 is modified (phosphoserine). The disordered stretch occupies residues 227-256; it reads LRTRTSSSETEEKKPEKPLILQSLGPKTQS. One can recognise an SH3 3 domain in the interval 269-330; sequence KAKEYCRTLF…PDNFAVQINE (62 aa). Residues 333–428 form a disordered region; the sequence is KDFPKPKKPP…PPPPIAKING (96 aa). 3 short sequence motifs (SH3-binding) span residues 336–352, 378–397, and 410–422; these read PKPKKPPPPAKAPAPKP, KPSKPAAPQVPPKKPTPPTK, and PKRPEKPVPPPPP. The segment covering 341 to 351 has biased composition (pro residues); it reads PPPPAKAPAPK. Basic and acidic residues predominate over residues 356–379; the sequence is AAEKKYFSLKPEEKDEKSTLEQKP. Pro residues predominate over residues 385–395; that stretch reads PQVPPKKPTPP. Serine 458, serine 463, serine 469, serine 510, and serine 514 each carry phosphoserine. Lysine 523 participates in a covalent cross-link: Glycyl lysine isopeptide (Lys-Gly) (interchain with G-Cter in SUMO2). Phosphothreonine is present on threonine 565. The stretch at 577–638 forms a coiled coil; that stretch reads DVKKNSLDEL…IEKLKKAVLS (62 aa). Serine 582 carries the post-translational modification Phosphoserine.

In terms of assembly, homodimer. Interacts with F-actin, PKD2, NPHS1 and NPHS2. Interacts with WTIP. Interacts with DDN; interaction is direct. Interacts (via SH3 2 domain) with CBL (via phosphorylated C-terminus). Interacts with BCAR1/p130Cas (via SH3 domain). Interacts with MVB12A and ARHGAP17. Interacts with ANLN, CD2 and CBLB. Interacts with PDCD6IP and TSG101. Interacts with RIN3. Interacts directly with RET (inactive) and CBLC; upon RET activation by GDNF suggested to dissociate from RET as CBLC:CD2AP complex. Interacts with CGNL1 and SH3BP1; probably part of a complex at cell junctions. Interacts with CAPZA1. As to quaternary structure, (Microbial infection) Interacts (via SH3 domains) with Chikungunya virus non-structural protein 3 (via C-terminus); this interaction plays a role in initiation of viral replication. Post-translationally, phosphorylated on tyrosine residues; probably by c-Abl, Fyn and c-Src. As to expression, widely expressed in fetal and adult tissues.

It is found in the cytoplasm. The protein localises to the cytoskeleton. Its subcellular location is the cell projection. It localises to the ruffle. The protein resides in the cell junction. Its function is as follows. Seems to act as an adapter protein between membrane proteins and the actin cytoskeleton. In collaboration with CBLC, modulates the rate of RET turnover and may act as regulatory checkpoint that limits the potency of GDNF on neuronal survival. Controls CBLC function, converting it from an inhibitor to a promoter of RET degradation. May play a role in receptor clustering and cytoskeletal polarity in the junction between T-cell and antigen-presenting cell. May anchor the podocyte slit diaphragm to the actin cytoskeleton in renal glomerolus. Also required for cytokinesis. Plays a role in epithelial cell junctions formation. The polypeptide is CD2-associated protein (CD2AP) (Homo sapiens (Human)).